The sequence spans 75 residues: UPF0291 protein LMOf2365_1322 (75 aa).

The segment at aspartate 56 to histidine 75 is disordered. Over residues histidine 65 to histidine 75 the composition is skewed to basic residues.

The protein belongs to the UPF0291 family.

It is found in the cytoplasm. This Listeria monocytogenes serotype 4b (strain F2365) protein is UPF0291 protein LMOf2365_1322.